A 603-amino-acid polypeptide reads, in one-letter code: Myotubularin (603 aa).

2 positions are modified to phosphoserine: S13 and S18. The region spanning Q29–G97 is the GRAM domain. Residues G163–Y538 form the Myotubularin phosphatase domain. Residues N288, N313, and I314 each contribute to the a 1,2-diacyl-sn-glycero-3-phospho-(1D-myo-inositol-3,5-bisphosphate) site. Residues N288, N313, and I314 each contribute to the a 1,2-diacyl-sn-glycero-3-phospho-(1D-myo-inositol-3-phosphate) site. The active-site Phosphocysteine intermediate is C375. S376, D377, G378, W379, D380, R381, K417, and R421 together coordinate a 1,2-diacyl-sn-glycero-3-phospho-(1D-myo-inositol-3,5-bisphosphate). A 1,2-diacyl-sn-glycero-3-phospho-(1D-myo-inositol-3-phosphate)-binding residues include S376, D377, G378, W379, D380, and R381. A 1,2-diacyl-sn-glycero-3-phospho-(1D-myo-inositol-3-phosphate) is bound at residue R421. T495 carries the post-translational modification Phosphothreonine. The residue at position 588 (S588) is a Phosphoserine.

It belongs to the protein-tyrosine phosphatase family. Non-receptor class myotubularin subfamily. Heterodimer with MTMR12. Interacts with KMT2A/MLL1 (via SET domain). Interacts with DES in skeletal muscle but not in cardiac muscle. Interacts with SPEG. Widely expressed with highest levels detected in heart and muscle and low levels in brain (at protein level). Expressed in skeletal muscles (at protein level).

It localises to the cytoplasm. The protein localises to the cell membrane. The protein resides in the cell projection. Its subcellular location is the filopodium. It is found in the ruffle. It localises to the late endosome. The protein localises to the myofibril. The protein resides in the sarcomere. It carries out the reaction a 1,2-diacyl-sn-glycero-3-phospho-(1D-myo-inositol-3-phosphate) + H2O = a 1,2-diacyl-sn-glycero-3-phospho-(1D-myo-inositol) + phosphate. The enzyme catalyses a 1,2-diacyl-sn-glycero-3-phospho-(1D-myo-inositol-3,5-bisphosphate) + H2O = a 1,2-diacyl-sn-glycero-3-phospho-(1D-myo-inositol-5-phosphate) + phosphate. It catalyses the reaction 1,2-dioctanoyl-sn-glycero-3-phospho-(1-D-myo-inositol-3-phosphate) + H2O = 1,2-dioctanoyl-sn-glycero-3-phospho-(1D-myo-inositol) + phosphate. The catalysed reaction is 1,2-dioctanoyl-sn-glycero-3-phospho-(1D-myo-inositol-3,5-bisphosphate) + H2O = 1,2-dioctanoyl-sn-glycero-3-phospho-(1D-myo-inositol-5-phosphate) + phosphate. It carries out the reaction 1,2-dihexadecanoyl-sn-glycero-3-phospho-(1D-myo-inositol-3,5-phosphate) + H2O = 1,2-dihexadecanoyl-sn-glycero-3-phospho-(1D-myo-inositol-5-phosphate) + phosphate. Allosterically activated by phosphatidylinositol 5-phosphate (PI5P). Its function is as follows. Lipid phosphatase which dephosphorylates phosphatidylinositol 3-monophosphate (PI3P) and phosphatidylinositol 3,5-bisphosphate (PI(3,5)P2). Has also been shown to dephosphorylate phosphotyrosine- and phosphoserine-containing peptides. Negatively regulates EGFR degradation through regulation of EGFR trafficking from the late endosome to the lysosome. Plays a role in vacuolar formation and morphology. Regulates desmin intermediate filament assembly and architecture. Plays a role in mitochondrial morphology and positioning. Required for skeletal muscle maintenance but not for myogenesis. In skeletal muscles, stabilizes MTMR12 protein levels. This chain is Myotubularin, found in Mus musculus (Mouse).